Consider the following 587-residue polypeptide: Chaperonin GroEL 1 (587 aa).

ATP contacts are provided by residues 29 to 32 (TIGP), 86 to 90 (DGTTT), Gly413, and Asp492.

The protein belongs to the chaperonin (HSP60) family. In terms of assembly, forms a cylinder of 14 subunits composed of two heptameric rings stacked back-to-back. Interacts with the co-chaperonin GroES.

The protein localises to the cytoplasm. The catalysed reaction is ATP + H2O + a folded polypeptide = ADP + phosphate + an unfolded polypeptide.. Its function is as follows. Together with its co-chaperonin GroES, plays an essential role in assisting protein folding. The GroEL-GroES system forms a nano-cage that allows encapsulation of the non-native substrate proteins and provides a physical environment optimized to promote and accelerate protein folding. The polypeptide is Chaperonin GroEL 1 (Prochlorococcus marinus (strain MIT 9515)).